Consider the following 88-residue polypeptide: MKFFLLFLVVLPIMGVLGKKNGYAVDSKGKAPECFLSNYCNNECTKVHYADKGYCCLLSCYCFGLNDDKKVLEISDTTKKYCDFTIIN.

Residues 1-18 (MKFFLLFLVVLPIMGVLG) form the signal peptide. Positions 20-83 (KNGYAVDSKG…ISDTTKKYCD (64 aa)) constitute an LCN-type CS-alpha/beta domain. 4 disulfide bridges follow: Cys34–Cys55, Cys40–Cys60, Cys44–Cys62, and Cys56–Cys82.

Belongs to the long (4 C-C) scorpion toxin superfamily. Sodium channel inhibitor family. Beta subfamily. In terms of tissue distribution, expressed by the venom gland.

The protein localises to the secreted. In terms of biological role, excitatory insect toxins induce a spastic paralysis. They bind voltage-independently at site-4 of sodium channels (Nav) and shift the voltage of activation toward more negative potentials thereby affecting sodium channel activation and promoting spontaneous and repetitive firing. This is Beta-insect excitatory toxin LqhIT1b from Leiurus hebraeus (Hebrew deathstalker scorpion).